Here is a 431-residue protein sequence, read N- to C-terminus: Serine--tRNA ligase (431 aa).

238-240 (TSE) contributes to the L-serine binding site. 269-271 (RSE) contacts ATP. Glu-292 is a binding site for L-serine. Residue 356 to 359 (EISS) coordinates ATP. Ser-391 serves as a coordination point for L-serine.

This sequence belongs to the class-II aminoacyl-tRNA synthetase family. Type-1 seryl-tRNA synthetase subfamily. As to quaternary structure, homodimer. The tRNA molecule binds across the dimer.

Its subcellular location is the cytoplasm. It carries out the reaction tRNA(Ser) + L-serine + ATP = L-seryl-tRNA(Ser) + AMP + diphosphate + H(+). The enzyme catalyses tRNA(Sec) + L-serine + ATP = L-seryl-tRNA(Sec) + AMP + diphosphate + H(+). It functions in the pathway aminoacyl-tRNA biosynthesis; selenocysteinyl-tRNA(Sec) biosynthesis; L-seryl-tRNA(Sec) from L-serine and tRNA(Sec): step 1/1. Catalyzes the attachment of serine to tRNA(Ser). Is also able to aminoacylate tRNA(Sec) with serine, to form the misacylated tRNA L-seryl-tRNA(Sec), which will be further converted into selenocysteinyl-tRNA(Sec). This chain is Serine--tRNA ligase, found in Leptothrix cholodnii (strain ATCC 51168 / LMG 8142 / SP-6) (Leptothrix discophora (strain SP-6)).